A 280-amino-acid polypeptide reads, in one-letter code: Phosphatidylglycerol--prolipoprotein diacylglyceryl transferase (280 aa).

The next 2 membrane-spanning stretches (helical) occupy residues F59–Y79 and G97–W117. Residue R142 coordinates a 1,2-diacyl-sn-glycero-3-phospho-(1'-sn-glycerol). The next 2 membrane-spanning stretches (helical) occupy residues G207–F227 and F233–I253.

It belongs to the Lgt family.

Its subcellular location is the cell inner membrane. The catalysed reaction is L-cysteinyl-[prolipoprotein] + a 1,2-diacyl-sn-glycero-3-phospho-(1'-sn-glycerol) = an S-1,2-diacyl-sn-glyceryl-L-cysteinyl-[prolipoprotein] + sn-glycerol 1-phosphate + H(+). Its pathway is protein modification; lipoprotein biosynthesis (diacylglyceryl transfer). Catalyzes the transfer of the diacylglyceryl group from phosphatidylglycerol to the sulfhydryl group of the N-terminal cysteine of a prolipoprotein, the first step in the formation of mature lipoproteins. This chain is Phosphatidylglycerol--prolipoprotein diacylglyceryl transferase, found in Gluconacetobacter diazotrophicus (strain ATCC 49037 / DSM 5601 / CCUG 37298 / CIP 103539 / LMG 7603 / PAl5).